Consider the following 243-residue polypeptide: tRNA (guanine-N(1)-)-methyltransferase (243 aa).

Residues glycine 108 and 127 to 132 (LGDFVL) each bind S-adenosyl-L-methionine.

This sequence belongs to the RNA methyltransferase TrmD family. As to quaternary structure, homodimer.

It localises to the cytoplasm. The catalysed reaction is guanosine(37) in tRNA + S-adenosyl-L-methionine = N(1)-methylguanosine(37) in tRNA + S-adenosyl-L-homocysteine + H(+). Its function is as follows. Specifically methylates guanosine-37 in various tRNAs. This Streptococcus pyogenes serotype M2 (strain MGAS10270) protein is tRNA (guanine-N(1)-)-methyltransferase.